Reading from the N-terminus, the 77-residue chain is Acyl carrier protein (77 aa).

One can recognise a Carrier domain in the interval 2–77; it reads SSIEERVNKI…SAVDYIKAHS (76 aa). Ser-37 carries the post-translational modification O-(pantetheine 4'-phosphoryl)serine.

It belongs to the acyl carrier protein (ACP) family. Post-translationally, 4'-phosphopantetheine is transferred from CoA to a specific serine of apo-ACP by AcpS. This modification is essential for activity because fatty acids are bound in thioester linkage to the sulfhydryl of the prosthetic group.

It localises to the cytoplasm. The protein operates within lipid metabolism; fatty acid biosynthesis. In terms of biological role, carrier of the growing fatty acid chain in fatty acid biosynthesis. The protein is Acyl carrier protein of Alcanivorax borkumensis (strain ATCC 700651 / DSM 11573 / NCIMB 13689 / SK2).